A 226-amino-acid polypeptide reads, in one-letter code: Glutathione peroxidase 3 (226 aa).

Positions 1 to 24 (MARLLQASCLLSLLLAGFVPQSRG) are cleaved as a signal peptide. Sec-73 is a catalytic residue. Sec-73 is a non-standard amino acid (selenocysteine).

The protein belongs to the glutathione peroxidase family. Homotetramer. Secreted in plasma.

The protein resides in the secreted. It catalyses the reaction 2 glutathione + H2O2 = glutathione disulfide + 2 H2O. It carries out the reaction tert-butyl hydroperoxide + 2 glutathione = tert-butanol + glutathione disulfide + H2O. Its function is as follows. Protects cells and enzymes from oxidative damage, by catalyzing the reduction of hydrogen peroxide, lipid peroxides and organic hydroperoxide, by glutathione. In Hylobates lar (Lar gibbon), this protein is Glutathione peroxidase 3.